A 436-amino-acid polypeptide reads, in one-letter code: Serine/threonine-protein kinase STK11 (436 aa).

Ser-31 carries the phosphoserine modification. An N6-acetyllysine mark is found at Lys-44 and Lys-48. Residues 45 to 90 are sufficient for interaction with SIRT1; sequence LIGKYLMGDLLGEGSYGKVKEVLDSETLCRRAVKILKKKKLRRIPN. The Protein kinase domain occupies 49-309; sequence YLMGDLLGEG…IRQIRQHSWF (261 aa). ATP contacts are provided by residues 55–63 and Lys-78; that span reads LGEGSYGKV. An N6-acetyllysine mark is found at Lys-96 and Lys-97. Asp-176 serves as the catalytic Proton acceptor. Phosphothreonine; by autocatalysis is present on Thr-189. Residues Lys-296 and Lys-311 each carry the N6-acetyllysine modification. At Ser-325 the chain carries Phosphoserine. Residue Thr-336 is modified to Phosphothreonine; by autocatalysis. A Phosphothreonine; by ATM and autocatalysis modification is found at Thr-366. Residues 397 to 421 form a disordered region; that stretch reads GTEPQLSSKVKPEGRPGAANPARKV. Ser-403 carries the phosphoserine modification. Lys-420 carries the post-translational modification N6-acetyllysine. The S-palmitoyl cysteine moiety is linked to residue Cys-422. N6-acetyllysine is present on Lys-426. Position 431 is a phosphoserine; by autocatalysis, PKA, PKC/PRKCZ and RPS6KA1 (Ser-431). Cys-433 carries the cysteine methyl ester modification. Residue Cys-433 is the site of S-farnesyl cysteine attachment. Lys-434 bears the N6-acetyllysine mark. A propeptide spans 434 to 436 (removed in mature form); it reads KQQ.

This sequence belongs to the protein kinase superfamily. CAMK Ser/Thr protein kinase family. LKB1 subfamily. Catalytic component of a trimeric complex composed of STK11/LKB1, STRAD (STRADA or STRADB) and CAB39/MO25 (CAB39/MO25alpha or CAB39L/MO25beta): the complex tethers STK11/LKB1 in the cytoplasm and stimulates its catalytic activity. Found in a ternary complex composed of SMAD4, STK11/LKB1 and STK11IP. Interacts with NR4A1, p53/TP53, SMAD4, STK11IP and WDR6. Interacts with NISCH; this interaction may increase STK11 activity. Interacts with SIRT1; the interaction deacetylates STK11. Interacts with CDKN1A. Mg(2+) serves as cofactor. Mn(2+) is required as a cofactor. In terms of processing, phosphorylated by ATM at Thr-366 following ionizing radiation (IR). Phosphorylation at Ser-431 by RPS6KA1 and/or some PKA is required to inhibit cell growth. Phosphorylation at Ser-431 is also required during neuronal polarization to mediate phosphorylation of BRSK1 and BRSK2. Phosphorylation by PKC/PRKCZ at Ser-397 in isoform 2 promotes metformin (or peroxynitrite)-induced nuclear export of STK11 and activation of AMPK. UV radiation -induced phosphorylation at Thr-366 mediates CDKN1A degradation. Acetylated. Deacetylation at Lys-48 enhances cytoplasmic localization and kinase activity in vitro. As to expression, expressed in brain, heart, testis, skeletal muscle and spleen, and weakly in liver and kidney. Isoform 1 is expressed at highest levels in the brain. Isoform 2 is expressed at highest levels in the testis, primarily in postmitotic developing germ cells (at protein level).

It localises to the nucleus. The protein resides in the cytoplasm. It is found in the membrane. Its subcellular location is the mitochondrion. It catalyses the reaction L-seryl-[protein] + ATP = O-phospho-L-seryl-[protein] + ADP + H(+). The catalysed reaction is L-threonyl-[protein] + ATP = O-phospho-L-threonyl-[protein] + ADP + H(+). With respect to regulation, activated by forming a complex with STRAD (STRADA or STRADB) and CAB39/MO25 (CAB39/MO25alpha or CAB39L/MO25beta): STRADA (or STRADB)-binding promotes a conformational change of STK11/LKB1 in an active conformation, which is stabilized by CAB39/MO25alpha (or CAB39L/MO25beta) interacting with the STK11/LKB1 activation loop. Sequestration in the nucleus by NR4A1 prevents it from phosphorylating and activating cytoplasmic AMPK. Its function is as follows. Tumor suppressor serine/threonine-protein kinase that controls the activity of AMP-activated protein kinase (AMPK) family members, thereby playing a role in various processes such as cell metabolism, cell polarity, apoptosis and DNA damage response. Acts by phosphorylating the T-loop of AMPK family proteins, thus promoting their activity: phosphorylates PRKAA1, PRKAA2, BRSK1, BRSK2, MARK1, MARK2, MARK3, MARK4, NUAK1, NUAK2, SIK1, SIK2, SIK3 and SNRK but not MELK. Also phosphorylates non-AMPK family proteins such as STRADA, PTEN and possibly p53/TP53. Acts as a key upstream regulator of AMPK by mediating phosphorylation and activation of AMPK catalytic subunits PRKAA1 and PRKAA2 and thereby regulates processes including: inhibition of signaling pathways that promote cell growth and proliferation when energy levels are low, glucose homeostasis in liver, activation of autophagy when cells undergo nutrient deprivation, and B-cell differentiation in the germinal center in response to DNA damage. Also acts as a regulator of cellular polarity by remodeling the actin cytoskeleton. Required for cortical neuron polarization by mediating phosphorylation and activation of BRSK1 and BRSK2, leading to axon initiation and specification. Involved in DNA damage response: interacts with p53/TP53 and recruited to the CDKN1A/WAF1 promoter to participate in transcription activation. Able to phosphorylate p53/TP53; the relevance of such result in vivo is however unclear and phosphorylation may be indirect and mediated by downstream STK11/LKB1 kinase NUAK1. Also acts as a mediator of p53/TP53-dependent apoptosis via interaction with p53/TP53: translocates to the mitochondrion during apoptosis and regulates p53/TP53-dependent apoptosis pathways. Regulates UV radiation-induced DNA damage response mediated by CDKN1A. In association with NUAK1, phosphorylates CDKN1A in response to UV radiation and contributes to its degradation which is necessary for optimal DNA repair. In terms of biological role, has a role in spermiogenesis. This chain is Serine/threonine-protein kinase STK11, found in Rattus norvegicus (Rat).